A 133-amino-acid chain; its full sequence is Agouti-signaling protein (133 aa).

An N-terminal signal peptide occupies residues 1–22 (MDVSRLLLATLLVCLCFLTAYS). N-linked (GlcNAc...) asparagine glycosylation is present at N39. Residues 56-95 (NKKSKKISRNEAEKKKRPSKRKAPMKNVARTRPPPPTPCV) form a disordered region. Positions 70 to 79 (KKRPSKRKAP) are enriched in basic residues. Cystine bridges form between C94/C109, C101/C115, C108/C126, C112/C133, and C117/C124. Residues 94–133 (CVATRDSCKPPAPACCDPCAFCQCRFFRSACSCRVLNPTC) form the Agouti domain.

It is found in the secreted. Involved in the regulation of melanogenesis. The binding of ASP to MC1R precludes alpha-MSH initiated signaling and thus blocks production of cAMP, leading to a down-regulation of eumelanogenesis (brown/black pigment) and thus increasing synthesis of pheomelanin (yellow/red pigment). The polypeptide is Agouti-signaling protein (ASIP) (Bos taurus (Bovine)).